Reading from the N-terminus, the 368-residue chain is Endophilin-A2 (368 aa).

The interval 1 to 21 is membrane-binding amphipathic helix; it reads MSVAGLKKQFYKASQLVSEKV. Residues 18–249 enclose the BAR domain; that stretch reads SEKVGGAEGT…LKRRVREASS (232 aa). Residues 60-87 are required for dimerization upon membrane association; the sequence is PNPASRAKLTMLNTVSKIRGQVKNPGYP. Positions 180–250 form a coiled coil; the sequence is DEELRQALEK…KRRVREASSR (71 aa). Positions 218–254 are interaction with ARC; that stretch reads LVDAQLDYHRQAVQILEELADKLKRRVREASSRPKRE. Residues 244 to 307 form a disordered region; it reads VREASSRPKR…MPSKSMPPLD (64 aa). Residues 245 to 263 show a composition bias toward basic and acidic residues; the sequence is REASSRPKREFKPRPREPF. Ser-288 and Ser-292 each carry phosphoserine. Residues 306–365 form the SH3 domain; the sequence is LDQPSCKALYDFEPENDGELGFREGDLITLTNQIDENWYEGMLHGQSGFFPLSYVQVLVP. Tyr-315 carries the post-translational modification Phosphotyrosine.

The protein belongs to the endophilin family. Interacts with ARC, SYNJ1 and DNM1. Interacts with PDCD6IP. Interacts with BIN2.

The protein localises to the cytoplasm. Its subcellular location is the early endosome membrane. It is found in the cell projection. It localises to the podosome. Functionally, implicated in endocytosis. May recruit other proteins to membranes with high curvature. This Mus musculus (Mouse) protein is Endophilin-A2 (Sh3gl1).